The following is a 366-amino-acid chain: Mitogen-activated protein kinase p38a (366 aa).

A Protein kinase domain is found at 25–312; the sequence is YQDLQPVGSG…AEEALSHPYL (288 aa). Residues 31–39 and lysine 54 contribute to the ATP site; that span reads VGSGAYGQV. Catalysis depends on aspartate 154, which acts as the Proton acceptor. Threonine 184 is subject to Phosphothreonine. The TXY motif lies at 184–186; the sequence is TGY. Tyrosine 186 bears the Phosphotyrosine mark.

This sequence belongs to the protein kinase superfamily. CMGC Ser/Thr protein kinase family. MAP kinase subfamily. Mg(2+) serves as cofactor. Post-translationally, dually phosphorylated on Thr-184 and Tyr-186, which activates the enzyme.

It is found in the nucleus. The catalysed reaction is L-seryl-[protein] + ATP = O-phospho-L-seryl-[protein] + ADP + H(+). The enzyme catalyses L-threonyl-[protein] + ATP = O-phospho-L-threonyl-[protein] + ADP + H(+). Activated by threonine and tyrosine phosphorylation by Mkk3 in response to environmental stress. Its function is as follows. Kinase involved in a signal transduction pathway. May down-regulate insect immunity gene expression after prolonged infection. The polypeptide is Mitogen-activated protein kinase p38a (Drosophila melanogaster (Fruit fly)).